Consider the following 492-residue polypeptide: Stomatal closure-related actin-binding protein 2 (492 aa).

The stretch at 112 to 132 forms a coiled coil; sequence LKKLRDALETMRGRMDGRNRE.

Belongs to the SCAB family. As to expression, expressed in roots, stems, leaves, siliques and flowers.

It localises to the cytoplasm. Its subcellular location is the cytoskeleton. In terms of biological role, probable plant-specific actin binding protein that bundles and stabilizes microfilaments (MFs). In Arabidopsis thaliana (Mouse-ear cress), this protein is Stomatal closure-related actin-binding protein 2.